We begin with the raw amino-acid sequence, 225 residues long: Urease accessory protein UreF (225 aa).

This sequence belongs to the UreF family. UreD, UreF and UreG form a complex that acts as a GTP-hydrolysis-dependent molecular chaperone, activating the urease apoprotein by helping to assemble the nickel containing metallocenter of UreC. The UreE protein probably delivers the nickel.

It localises to the cytoplasm. Its function is as follows. Required for maturation of urease via the functional incorporation of the urease nickel metallocenter. The polypeptide is Urease accessory protein UreF (Geobacillus kaustophilus (strain HTA426)).